Here is a 287-residue protein sequence, read N- to C-terminus: UBX domain-containing protein 1 (287 aa).

The UBA domain maps to Met-1 to His-42. Residues Asp-44–Tyr-207 form a disordered region. 2 stretches are compositionally biased toward basic and acidic residues: residues Cys-72–Lys-114 and Lys-129–Arg-169. A coiled-coil region spans residues Cys-72–Lys-164. Low complexity predominate over residues Ser-176–Pro-197. Residues Lys-205–Val-284 form the UBX domain.

It localises to the cytoplasm. Its function is as follows. Component of a complex required to couple deglycosylation and proteasome-mediated degradation of misfolded proteins in the endoplasmic reticulum that are retrotranslocated in the cytosol. Involved in ubiquitin-proteasome systems. The chain is UBX domain-containing protein 1 (ubxn1) from Xenopus tropicalis (Western clawed frog).